Here is a 528-residue protein sequence, read N- to C-terminus: Capsid scaffolding protein (528 aa).

Active-site charge relay system residues include H46, S116, and H135. The interaction with pAP stretch occupies residues 270 to 288; that stretch reads HGNYDAVESATATTAMSNQ. Positions 394–431 are disordered; the sequence is KKRHFQSDSEDELSFPGDPEYTKKRRRHRVDNDDDKEM. Positions 416-422 match the Nuclear localization signal motif; that stretch reads KKRRRHR. Residues 508–528 are interaction with major capsid protein; the sequence is STDLLKLNKKLFVDALNKMDS.

This sequence belongs to the herpesviridae capsid scaffolding protein family. As to quaternary structure, homomultimer. Interacts with major capsid protein. Exists in a monomer-dimer equilibrium with the dimer being the active species. Capsid scaffolding protein is cleaved by assemblin after formation of the spherical procapsid. As a result, the capsid obtains its mature, icosahedral shape. Cleavages occur at two or more sites: release (R-site) and maturation (M-site).

It is found in the host cytoplasm. The protein localises to the host nucleus. It catalyses the reaction Cleaves -Ala-|-Ser- and -Ala-|-Ala- bonds in the scaffold protein.. Functionally, acts as a scaffold protein by binding major capsid protein in the cytoplasm, inducing the nuclear localization of both proteins. Multimerizes in the nucleus such as major capsid protein forms the icosahedral T=16 capsid. Autocatalytic cleavage releases the assembly protein, and subsequently abolishes interaction with major capsid protein. Cleavages products are evicted from the capsid before or during DNA packaging. Its function is as follows. Protease that plays an essential role in virion assembly within the nucleus. Catalyzes the cleavage of the assembly protein after formation of the spherical procapsid. By that cleavage, the capsid matures and gains its icosahedral shape. The cleavage sites seem to include -Ala-Ser-, -Ala-Ala-, as well as Ala-Thr bonds. Assemblin and cleavages products are evicted from the capsid before or during DNA packaging. Plays a major role in capsid assembly. Acts as a scaffold protein by binding major capsid protein. Multimerizes in the nucleus such as major capsid protein forms the icosahedral T=16 capsid. Cleaved by assemblin after capsid completion. The cleavages products are evicted from the capsid before or during DNA packaging. The chain is Capsid scaffolding protein (U53) from Homo sapiens (Human).